A 512-amino-acid polypeptide reads, in one-letter code: RCC1 domain-containing protein DDB_G0279253 (512 aa).

RCC1 repeat units follow at residues 1–56 (MKIY…MIID), 58–134 (GDLY…ACDN), 135–185 (NGNI…NNNN), 197–248 (SGGV…ALSS), 249–319 (ENDV…LLDI), 321–384 (FKNV…LLTN), 386–443 (DKLY…IQVY), and 454–512 (NNNI…FILP). A compositionally biased stretch (polar residues) spans 66-77 (NDSGQLGINSNE). 2 disordered regions span residues 66 to 85 (NDSG…QQQQ) and 162 to 200 (STSN…SGGV). Low complexity predominate over residues 162–196 (STSNNKNNNNNNNNNNNNNNNNNNNNNNNNNNNNN).

This chain is RCC1 domain-containing protein DDB_G0279253, found in Dictyostelium discoideum (Social amoeba).